The chain runs to 371 residues: Chorismate synthase (371 aa).

NADP(+) contacts are provided by arginine 48 and arginine 54. FMN is bound by residues 131-133 (RSS), 245-246 (NA), glycine 290, 305-309 (KPTSS), and arginine 331.

It belongs to the chorismate synthase family. As to quaternary structure, homotetramer. FMNH2 is required as a cofactor.

It carries out the reaction 5-O-(1-carboxyvinyl)-3-phosphoshikimate = chorismate + phosphate. It functions in the pathway metabolic intermediate biosynthesis; chorismate biosynthesis; chorismate from D-erythrose 4-phosphate and phosphoenolpyruvate: step 7/7. In terms of biological role, catalyzes the anti-1,4-elimination of the C-3 phosphate and the C-6 proR hydrogen from 5-enolpyruvylshikimate-3-phosphate (EPSP) to yield chorismate, which is the branch point compound that serves as the starting substrate for the three terminal pathways of aromatic amino acid biosynthesis. This reaction introduces a second double bond into the aromatic ring system. The polypeptide is Chorismate synthase (Mesorhizobium japonicum (strain LMG 29417 / CECT 9101 / MAFF 303099) (Mesorhizobium loti (strain MAFF 303099))).